The following is a 1164-amino-acid chain: DNA-directed RNA polymerase subunit beta (1164 aa).

Disordered stretches follow at residues 975–994 and 1143–1164; these read RSSL…GKSN and ANAA…MDVS. Composition is skewed to basic and acidic residues over residues 981–991 and 1152–1164; these read RDGERQVDDFG and SRDE…MDVS.

The protein belongs to the RNA polymerase beta chain family. The RNAP catalytic core consists of 2 alpha, 1 beta, 1 beta' and 1 omega subunit. When a sigma factor is associated with the core the holoenzyme is formed, which can initiate transcription.

The enzyme catalyses RNA(n) + a ribonucleoside 5'-triphosphate = RNA(n+1) + diphosphate. Functionally, DNA-dependent RNA polymerase catalyzes the transcription of DNA into RNA using the four ribonucleoside triphosphates as substrates. This chain is DNA-directed RNA polymerase subunit beta, found in Corynebacterium jeikeium (strain K411).